A 185-amino-acid polypeptide reads, in one-letter code: Acireductone dioxygenase (185 aa).

Residues Met1–Glu23 are disordered. His102, His104, Glu108, and His146 together coordinate Fe(2+). Residues His102, His104, Glu108, and His146 each coordinate Ni(2+).

This sequence belongs to the acireductone dioxygenase (ARD) family. In terms of assembly, monomer. The cofactor is Fe(2+). Ni(2+) serves as cofactor.

It carries out the reaction 1,2-dihydroxy-5-(methylsulfanyl)pent-1-en-3-one + O2 = 3-(methylsulfanyl)propanoate + CO + formate + 2 H(+). The enzyme catalyses 1,2-dihydroxy-5-(methylsulfanyl)pent-1-en-3-one + O2 = 4-methylsulfanyl-2-oxobutanoate + formate + 2 H(+). The protein operates within amino-acid biosynthesis; L-methionine biosynthesis via salvage pathway; L-methionine from S-methyl-5-thio-alpha-D-ribose 1-phosphate: step 5/6. Catalyzes 2 different reactions between oxygen and the acireductone 1,2-dihydroxy-3-keto-5-methylthiopentene (DHK-MTPene) depending upon the metal bound in the active site. Fe-containing acireductone dioxygenase (Fe-ARD) produces formate and 2-keto-4-methylthiobutyrate (KMTB), the alpha-ketoacid precursor of methionine in the methionine recycle pathway. Ni-containing acireductone dioxygenase (Ni-ARD) produces methylthiopropionate, carbon monoxide and formate, and does not lie on the methionine recycle pathway. In Prochlorococcus marinus (strain MIT 9303), this protein is Acireductone dioxygenase.